The chain runs to 250 residues: Golgi SNAP receptor complex member 1 (250 aa).

An N-acetylalanine modification is found at Ala-2. Residues 2–229 lie on the Cytoplasmic side of the membrane; sequence AAGTSNYWED…QRINLRKRRD (228 aa). Residues 9-30 are a coiled coil; sequence WEDLRKQARQLENELDLKLVSF. The segment at 38–59 is disordered; that stretch reads SHSSARDGGRDRYSSDTTPLLN. A compositionally biased stretch (basic and acidic residues) spans 41–51; it reads SARDGGRDRYS. Residues 68-95 are a coiled coil; that stretch reads ETMAIEIEQLLARLTGVNDKMAEYTNSA. Ser-141 bears the Phosphoserine mark. The chain crosses the membrane as a helical; Anchor for type IV membrane protein span at residues 230 to 250; it reads SLILGGVIGICTILLLLYAFH.

The protein belongs to the GOSR1 family. In terms of assembly, component of several multiprotein Golgi SNARE complexes. Identified in a SNARE complex with BET1, STX5 and YKT6, in a SNARE complex with BET1L, STX5 and YKT6, in a SNARE complex with STX5, GOSR2, SEC22B and BET1, and in complex with STX5 and COG3. Interacts with GABARAPL2.

It localises to the golgi apparatus membrane. Its function is as follows. Involved in transport from the ER to the Golgi apparatus as well as in intra-Golgi transport. It belongs to a super-family of proteins called t-SNAREs or soluble NSF (N-ethylmaleimide-sensitive factor) attachment protein receptor. May play a protective role against hydrogen peroxide induced cytotoxicity under glutathione depleted conditions in neuronal cells by regulating the intracellular ROS levels via inhibition of p38 MAPK (MAPK11, MAPK12, MAPK13 and MAPK14). Participates in docking and fusion stage of ER to cis-Golgi transport. Plays an important physiological role in VLDL-transport vesicle-Golgi fusion and thus in VLDL delivery to the hepatic cis-Golgi. This Cricetulus griseus (Chinese hamster) protein is Golgi SNAP receptor complex member 1 (GOSR1).